The following is a 344-amino-acid chain: Anthranilate phosphoribosyltransferase (344 aa).

5-phospho-alpha-D-ribose 1-diphosphate-binding positions include Gly85, 88–89 (GD), Thr93, 95–98 (NIST), 113–121 (KHGGRSVSS), and Ser125. Gly85 contacts anthranilate. A Mg(2+)-binding site is contributed by Ser97. Arg171 provides a ligand contact to anthranilate. 2 residues coordinate Mg(2+): Asp230 and Glu231.

It belongs to the anthranilate phosphoribosyltransferase family. In terms of assembly, homodimer. Mg(2+) is required as a cofactor.

The enzyme catalyses N-(5-phospho-beta-D-ribosyl)anthranilate + diphosphate = 5-phospho-alpha-D-ribose 1-diphosphate + anthranilate. The protein operates within amino-acid biosynthesis; L-tryptophan biosynthesis; L-tryptophan from chorismate: step 2/5. Its function is as follows. Catalyzes the transfer of the phosphoribosyl group of 5-phosphorylribose-1-pyrophosphate (PRPP) to anthranilate to yield N-(5'-phosphoribosyl)-anthranilate (PRA). The protein is Anthranilate phosphoribosyltransferase of Delftia acidovorans (strain DSM 14801 / SPH-1).